A 131-amino-acid polypeptide reads, in one-letter code: Probable flagellum biosynthesis repressor protein FlbT (131 aa).

It belongs to the FlbT family.

Its function is as follows. Has a post-transcriptional repressor function in flagellum biogenesis. Associates with the 5'-UTR of fljK mRNA and promotes its degradation. This chain is Probable flagellum biosynthesis repressor protein FlbT, found in Caulobacter sp. (strain K31).